Here is a 282-residue protein sequence, read N- to C-terminus: Virginiamycin B lyase (282 aa).

A substrate-binding site is contributed by His217. Glu256 contacts Mg(2+). His258 acts as the Proton acceptor in catalysis. Glu273 is a binding site for Mg(2+).

Belongs to the Vgb family. In terms of assembly, monomer. The cofactor is Mg(2+).

Inactivates the type B streptogramin antibiotics by linearizing the lactone ring at the ester linkage, generating a free phenylglycine carboxylate and converting the threonyl moiety into 2-amino-butenoic acid. The polypeptide is Virginiamycin B lyase (Mycolicibacterium smegmatis (strain ATCC 700084 / mc(2)155) (Mycobacterium smegmatis)).